The sequence spans 404 residues: Probable eukaryotic initiation factor 4A (404 aa).

The tract at residues 1–28 (MAQQGKVEPQDQDSFLDDQPGIRPIPSF) is disordered. Residues 26–54 (PSFDDMPLHQNLLRGIYSHGFEKPSSIQQ) carry the Q motif motif. Residues 57–231 (IVPFTRGGDI…KKFMRDPTRI (175 aa)) form the Helicase ATP-binding domain. An ATP-binding site is contributed by 70 to 77 (AQSGTGKT). A DEAD box motif is present at residues 179-182 (DEAD). A Helicase C-terminal domain is found at 242-402 (GIKQYFIAVE…ELPVDFAAYL (161 aa)).

The protein belongs to the DEAD box helicase family. eIF4A subfamily. As to quaternary structure, eIF4F is a multi-subunit complex, the composition of which varies with external and internal environmental conditions. It is composed of at least EIF4A, EIF4E and EIF4G.

The catalysed reaction is ATP + H2O = ADP + phosphate + H(+). Its function is as follows. ATP-dependent RNA helicase which is a subunit of the eIF4F complex involved in cap recognition and is required for mRNA binding to ribosome. In the current model of translation initiation, eIF4A unwinds RNA secondary structures in the 5'-UTR of mRNAs which is necessary to allow efficient binding of the small ribosomal subunit, and subsequent scanning for the initiator codon. The chain is Probable eukaryotic initiation factor 4A from Trypanosoma cruzi (strain CL Brener).